The sequence spans 213 residues: Uridine kinase (213 aa).

ATP is bound at residue 14 to 21 (GASASGKS).

The protein belongs to the uridine kinase family.

The protein localises to the cytoplasm. It carries out the reaction uridine + ATP = UMP + ADP + H(+). The catalysed reaction is cytidine + ATP = CMP + ADP + H(+). Its pathway is pyrimidine metabolism; CTP biosynthesis via salvage pathway; CTP from cytidine: step 1/3. It participates in pyrimidine metabolism; UMP biosynthesis via salvage pathway; UMP from uridine: step 1/1. This Vibrio atlanticus (strain LGP32) (Vibrio splendidus (strain Mel32)) protein is Uridine kinase.